The following is a 307-amino-acid chain: Bifunctional protein FolD (307 aa).

NADP(+) contacts are provided by residues Gly-165–Ser-167, Ser-190, and Ile-231.

This sequence belongs to the tetrahydrofolate dehydrogenase/cyclohydrolase family. Homodimer.

The catalysed reaction is (6R)-5,10-methylene-5,6,7,8-tetrahydrofolate + NADP(+) = (6R)-5,10-methenyltetrahydrofolate + NADPH. The enzyme catalyses (6R)-5,10-methenyltetrahydrofolate + H2O = (6R)-10-formyltetrahydrofolate + H(+). It participates in one-carbon metabolism; tetrahydrofolate interconversion. Its function is as follows. Catalyzes the oxidation of 5,10-methylenetetrahydrofolate to 5,10-methenyltetrahydrofolate and then the hydrolysis of 5,10-methenyltetrahydrofolate to 10-formyltetrahydrofolate. In Koribacter versatilis (strain Ellin345), this protein is Bifunctional protein FolD.